Here is a 675-residue protein sequence, read N- to C-terminus: Heat shock 70 kDa protein 12A (675 aa).

The segment at 1–45 is disordered; the sequence is MADKEAGGGDAGPRETAPTSTYSSPARSLGDTGITPLSPSHILND. Ala-2 carries the N-acetylalanine modification. Residues 17–26 are compositionally biased toward polar residues; that stretch reads APTSTYSSPA.

The protein belongs to the heat shock protein 70 family. In terms of assembly, interacts with SORL1 (via cytosolic C-terminus); this interaction affects SORL1 internalization and subcellular localization. Expressed most strongly in brain, kidney and heart with little or no expression in other tissues. In the brain, expressed in glial cells, including astrocytes (at protein level). In the aorta, preferentially expressed in lesions.

It is found in the cytoplasm. The protein resides in the nucleus. Functionally, adapter protein for SORL1, but not SORT1. Delays SORL1 internalization and affects SORL1 subcellular localization. This chain is Heat shock 70 kDa protein 12A (Hspa12a), found in Mus musculus (Mouse).